The primary structure comprises 452 residues: Exodeoxyribonuclease 7 large subunit (452 aa).

Belongs to the XseA family. Heterooligomer composed of large and small subunits.

It localises to the cytoplasm. It catalyses the reaction Exonucleolytic cleavage in either 5'- to 3'- or 3'- to 5'-direction to yield nucleoside 5'-phosphates.. Its function is as follows. Bidirectionally degrades single-stranded DNA into large acid-insoluble oligonucleotides, which are then degraded further into small acid-soluble oligonucleotides. The chain is Exodeoxyribonuclease 7 large subunit from Bacillus cereus (strain B4264).